The following is a 621-amino-acid chain: MYDIIVAGAGHAGCEAVLAAARTGMSCLLITSDLSAIARMSCNPAIGGVAKGQITREIDALGGEMAKAIDETGIQFRMLNKSKGAAMHSPRAQADRALYSVYMRKIIEEQDNIDLVQDTVTGLDVESGAVRGAILPSGRIIKGKSVILCCGTFLNGLIHIGMNHFPGGRTIAEPPVSGLTENLQSLGFRAGRLKTGTPPRIDSRSVNYSLVEEQSGDPDPRPFSFHTDSLGHRAQVSCFVTKTKETTHELLRTGFSRSPLFSGKVQGVGPRYCPSVEDKIFRFPDKNSHHIFLEPEGAETNEMYVNGFSTSLPEDIQLLALRSIPGLEHVKMIRPGYAIEYDFFFPYQIKNTLETKIIENLYFAGQINGTSGYEEAAAQGLMAGINASLKIQNRKPFVLDRSQAYIGVLIDDLVTKDIIEPYRMFTSSAEHRISLRHDNADIRLCRMGHEAGTVDFSSFTKTEYKISAIRQLRQLCDTMKLHPDQIISAMAGAAQQPPLQPIAISNLLKRPEIDFENLLVLSEDFRAGVNEITTDPDVFEQVVIDLKYEGYLKRDLLMTEKIARLESHSIPGSFSYATVSGLSNEGREKLTLHKPETIGQASRIPGVSPSDISVLLIKIGR.

8–13 (GAGHAG) is an FAD binding site. 269–283 (GPRYCPSVEDKIFRF) contributes to the NAD(+) binding site.

The protein belongs to the MnmG family. In terms of assembly, homodimer. Heterotetramer of two MnmE and two MnmG subunits. FAD serves as cofactor.

The protein localises to the cytoplasm. Functionally, NAD-binding protein involved in the addition of a carboxymethylaminomethyl (cmnm) group at the wobble position (U34) of certain tRNAs, forming tRNA-cmnm(5)s(2)U34. The polypeptide is tRNA uridine 5-carboxymethylaminomethyl modification enzyme MnmG (Chlorobium phaeobacteroides (strain DSM 266 / SMG 266 / 2430)).